The following is a 360-amino-acid chain: Phenylalanine--tRNA ligase alpha subunit (360 aa).

E260 contacts Mg(2+).

It belongs to the class-II aminoacyl-tRNA synthetase family. Phe-tRNA synthetase alpha subunit type 1 subfamily. As to quaternary structure, tetramer of two alpha and two beta subunits. Requires Mg(2+) as cofactor.

The protein resides in the cytoplasm. The catalysed reaction is tRNA(Phe) + L-phenylalanine + ATP = L-phenylalanyl-tRNA(Phe) + AMP + diphosphate + H(+). The chain is Phenylalanine--tRNA ligase alpha subunit from Rhizobium etli (strain CIAT 652).